Consider the following 321-residue polypeptide: Probable endolytic peptidoglycan transglycosylase RlpA (321 aa).

Belongs to the RlpA family.

In terms of biological role, lytic transglycosylase with a strong preference for naked glycan strands that lack stem peptides. The polypeptide is Probable endolytic peptidoglycan transglycosylase RlpA (Synechocystis sp. (strain ATCC 27184 / PCC 6803 / Kazusa)).